Reading from the N-terminus, the 236-residue chain is MNGLSLSATKVEGNLYATLDSFLGKAPRDMPTHVLRKFEDTVEVGSTTAFFVHQTTNGITSSDNAHTAIIMLADGTTSTLGEVSGNFSTDAGDVVIASAIAVASNSPQNAPPGVASATIIPEGSVNFNSGLTSSNVTQARINSVQQVTDSLGKNHGVFCRDIHVQRDDRHLAATKVIAVSGLTTDSRTQVVLSSYVLQRISATGTSVAFESGVHKDFVYNVLLTAYESHGCLATKA.

This is an uncharacterized protein from Micromonas pusilla (Picoplanktonic green alga).